The primary structure comprises 50 residues: Monellin chain B (50 aa).

Heterodimer of an A chain and a B chain.

Functionally, taste-modifying protein; intensely sweet-tasting protein. In Dioscoreophyllum cumminsii (Serendipity berry), this protein is Monellin chain B.